The sequence spans 415 residues: Serine hydroxymethyltransferase (415 aa).

Residues Leu-117 and 121–123 (GHL) contribute to the (6S)-5,6,7,8-tetrahydrofolate site. N6-(pyridoxal phosphate)lysine is present on Lys-226.

The protein belongs to the SHMT family. In terms of assembly, homodimer. It depends on pyridoxal 5'-phosphate as a cofactor.

The protein resides in the cytoplasm. The catalysed reaction is (6R)-5,10-methylene-5,6,7,8-tetrahydrofolate + glycine + H2O = (6S)-5,6,7,8-tetrahydrofolate + L-serine. It functions in the pathway one-carbon metabolism; tetrahydrofolate interconversion. It participates in amino-acid biosynthesis; glycine biosynthesis; glycine from L-serine: step 1/1. Catalyzes the reversible interconversion of serine and glycine with tetrahydrofolate (THF) serving as the one-carbon carrier. This reaction serves as the major source of one-carbon groups required for the biosynthesis of purines, thymidylate, methionine, and other important biomolecules. Also exhibits THF-independent aldolase activity toward beta-hydroxyamino acids, producing glycine and aldehydes, via a retro-aldol mechanism. This Dehalococcoides mccartyi (strain ATCC BAA-2266 / KCTC 15142 / 195) (Dehalococcoides ethenogenes (strain 195)) protein is Serine hydroxymethyltransferase.